We begin with the raw amino-acid sequence, 363 residues long: Lactose transport ATP-binding protein LacK (363 aa).

Residues 4–234 (VRLTDIRKSY…PDNMFVAGFI (231 aa)) enclose the ABC transporter domain. 36–43 (GPSGCGKS) provides a ligand contact to ATP.

It belongs to the ABC transporter superfamily.

The protein resides in the cell inner membrane. In terms of biological role, part of the binding-protein-dependent transport system for lactose. Probably responsible for energy coupling to the transport system. The polypeptide is Lactose transport ATP-binding protein LacK (lacK) (Rhizobium radiobacter (Agrobacterium tumefaciens)).